Consider the following 99-residue polypeptide: U1-theraphotoxin-Lsp1b (99 aa).

The signal sequence occupies residues 1 to 23 (MRSLTLAALLLCSLLLVFHTSAA). The propeptide occupies 24–50 (EELQAQEGHLMIPGDTDTALETVDDER). Cystine bridges form between Cys54/Cys67, Cys58/Cys91, Cys72/Cys74, and Cys85/Cys96.

It belongs to the neurotoxin 12 (Hwtx-2) family. 04 (lasiotoxin) subfamily. Expressed by the venom gland.

Its subcellular location is the secreted. In terms of biological role, toxin that causes irreversible contractile paralysis into adult Aedes aegypti resulting in 100% mortality after 24 hours. This chain is U1-theraphotoxin-Lsp1b, found in Lasiodora sp. (strain IBSP 8539) (Brazilian salmon pink birdeater).